A 578-amino-acid chain; its full sequence is SUMOylated effector protein AmpA (578 aa).

A disordered region spans residues P144–D169. 3 tandem repeats follow at residues T180 to A272, K304 to E425, and T428 to E557. The interval T180–E557 is 3 X approximate tandem repeats. The disordered stretch occupies residues V516–Y578.

In terms of processing, polysumoylated during infection on at least two lysine residues, in the N- and C-terminal section. SUMO2/3 modification of AmpA throughout the infection cycle is likely critical for bacterial intracellular survival, while terminal SUMO1 conjugation of AmpA may promote a late-stage infection cycle event. Only a small portion of the available AmpA pool is actually SUMOylated at any given time.

It localises to the secreted. Its subcellular location is the host membrane. The protein localises to the host cytoplasm. It is found in the host cytosol. Its function is as follows. Secreted effector that hijacks host cell SUMOylation during A.phagocytophilum infection and is important for the pathogen's intracellular survival. The protein is SUMOylated effector protein AmpA of Anaplasma phagocytophilum (strain HZ).